The primary structure comprises 152 residues: Xanthine-guanine phosphoribosyltransferase (152 aa).

5-phospho-alpha-D-ribose 1-diphosphate-binding positions include 37-38 (RG), R69, and 88-96 (DDLVDTGGT). R69 serves as a coordination point for GMP. D89 is a binding site for Mg(2+). Guanine contacts are provided by D92 and I135. D92 and I135 together coordinate xanthine. GMP contacts are provided by residues 92–96 (DTGGT) and 134–135 (WI).

The protein belongs to the purine/pyrimidine phosphoribosyltransferase family. XGPT subfamily. Homotetramer. The cofactor is Mg(2+).

The protein localises to the cell inner membrane. The catalysed reaction is GMP + diphosphate = guanine + 5-phospho-alpha-D-ribose 1-diphosphate. The enzyme catalyses XMP + diphosphate = xanthine + 5-phospho-alpha-D-ribose 1-diphosphate. It carries out the reaction IMP + diphosphate = hypoxanthine + 5-phospho-alpha-D-ribose 1-diphosphate. The protein operates within purine metabolism; GMP biosynthesis via salvage pathway; GMP from guanine: step 1/1. It participates in purine metabolism; XMP biosynthesis via salvage pathway; XMP from xanthine: step 1/1. Functionally, purine salvage pathway enzyme that catalyzes the transfer of the ribosyl-5-phosphate group from 5-phospho-alpha-D-ribose 1-diphosphate (PRPP) to the N9 position of the 6-oxopurines guanine and xanthine to form the corresponding ribonucleotides GMP (guanosine 5'-monophosphate) and XMP (xanthosine 5'-monophosphate), with the release of PPi. To a lesser extent, also acts on hypoxanthine. The polypeptide is Xanthine-guanine phosphoribosyltransferase (Edwardsiella ictaluri (strain 93-146)).